The following is a 434-amino-acid chain: Alpha-enolase (434 aa).

At S2 the chain carries N-acetylserine. K5 carries the post-translational modification N6-acetyllysine. The residue at position 27 (S27) is a Phosphoserine. An epitope recognized by CAR and healthy patient antibodies region spans residues 31 to 38; the sequence is FRAAVPSG. S40 provides a ligand contact to Mg(2+). Y44 carries the phosphotyrosine modification. The tract at residues 56-63 is epitope recognized by CAR antibodies; that stretch reads RYMGKGVS. Residue K60 is modified to N6-acetyllysine; alternate. K60 is modified (N6-succinyllysine; alternate). K64 and K71 each carry N6-acetyllysine. An N6-acetyllysine; alternate modification is found at K89. K89 carries the post-translational modification N6-succinyllysine; alternate. Residues K92 and K126 each carry the N6-acetyllysine modification. Residues 97–237 form a required for repression of c-myc promoter activity region; that stretch reads MDGTENKSKF…KTAIGKAGYT (141 aa). Residues H158 and E167 each coordinate substrate. Residues K193 and K199 each carry the N6-acetyllysine modification. N6-acetyllysine; alternate is present on K202. K202 is covalently cross-linked (Glycyl lysine isopeptide (Lys-Gly) (interchain with G-Cter in SUMO2); alternate). E210 acts as the Proton donor in catalysis. An N6-acetyllysine; alternate mark is found at K228 and K233. K228 carries the post-translational modification N6-succinyllysine; alternate. An N6-(2-hydroxyisobutyryl)lysine; alternate modification is found at K228. Residue K233 is modified to N6-malonyllysine; alternate. Position 245 (D245) interacts with Mg(2+). Position 254 is a phosphoserine (S254). The residue at position 256 (K256) is an N6-acetyllysine. A phosphoserine mark is found at S263 and S272. An N6-acetyllysine; alternate modification is found at K281. The residue at position 281 (K281) is an N6-(2-hydroxyisobutyryl)lysine; alternate. K285 carries the N6-acetyllysine modification. Residue Y287 is modified to Phosphotyrosine. S291 is modified (phosphoserine). Residues E293 and D318 each contribute to the Mg(2+) site. Substrate-binding residues include E293 and D318. 2 positions are modified to N6-acetyllysine: K335 and K343. K343 functions as the Proton acceptor in the catalytic mechanism. Residues 370-373 and K394 each bind substrate; that span reads SHRS. Residues 405-434 form a required for interaction with PLG region; sequence AKYNQLLRIEEELGSKAKFAGRNFRNPLAK. Residue K406 is modified to N6-acetyllysine. K420 is subject to N6-acetyllysine; alternate. K420 is modified (N6-succinyllysine; alternate). An N6-malonyllysine; alternate modification is found at K420.

The protein belongs to the enolase family. Mammalian enolase is composed of 3 isozyme subunits, alpha, beta and gamma, which can form homodimers or heterodimers which are cell-type and development-specific. ENO1 interacts with PLG in the neuronal plasma membrane and promotes its activation. The C-terminal lysine is required for this binding. Isoform MBP-1 interacts with TRAPPC2B. Interacts with ENO4 and PGAM2. Interacts with CMTM6. Mg(2+) serves as cofactor. Post-translationally, ISGylated. Lysine 2-hydroxyisobutyrylation (Khib) by p300/EP300 activates the phosphopyruvate hydratase activity. In terms of tissue distribution, the alpha/alpha homodimer is expressed in embryo and in most adult tissues. The alpha/beta heterodimer and the beta/beta homodimer are found in striated muscle, and the alpha/gamma heterodimer and the gamma/gamma homodimer in neurons.

The protein resides in the cytoplasm. Its subcellular location is the cell membrane. It localises to the myofibril. It is found in the sarcomere. The protein localises to the m line. The protein resides in the nucleus. It carries out the reaction (2R)-2-phosphoglycerate = phosphoenolpyruvate + H2O. The protein operates within carbohydrate degradation; glycolysis; pyruvate from D-glyceraldehyde 3-phosphate: step 4/5. Glycolytic enzyme the catalyzes the conversion of 2-phosphoglycerate to phosphoenolpyruvate. In addition to glycolysis, involved in various processes such as growth control, hypoxia tolerance and allergic responses. May also function in the intravascular and pericellular fibrinolytic system due to its ability to serve as a receptor and activator of plasminogen on the cell surface of several cell-types such as leukocytes and neurons. Stimulates immunoglobulin production. In terms of biological role, binds to the myc promoter and acts as a transcriptional repressor. May be a tumor suppressor. The protein is Alpha-enolase (ENO1) of Homo sapiens (Human).